The chain runs to 60 residues: Light-harvesting protein B-800/850 alpha chain (60 aa).

Residues 1 to 14 (MNNAKIWTVVKPST) are Cytoplasmic-facing. A helical membrane pass occupies residues 15–35 (GIPLILGAVAVAALIVHAGLL). Residue His31 participates in a bacteriochlorophyll binding. At 36-60 (TNTTWFANYWNGNPMATVVAVAPAQ) the chain is on the periplasmic side.

This sequence belongs to the antenna complex alpha subunit family. The core complex is formed by different alpha and beta chains, binding bacteriochlorophyll molecules, and arranged most probably in tetrameric structures disposed around the reaction center. The non-pigmented gamma chains may constitute additional components.

It is found in the cell inner membrane. Antenna complexes are light-harvesting systems, which transfer the excitation energy to the reaction centers. The chain is Light-harvesting protein B-800/850 alpha chain (pucA) from Rhodobacter capsulatus (Rhodopseudomonas capsulata).